Here is a 602-residue protein sequence, read N- to C-terminus: uncharacterized protein (602 aa).

An MCM domain is found at 271–472 (IIDILADILI…RDEEVAKYIF (202 aa)). ATP is bound at residue 315–322 (TEVGIDKT).

It belongs to the MCM family.

This is an uncharacterized protein from Methanocaldococcus jannaschii (strain ATCC 43067 / DSM 2661 / JAL-1 / JCM 10045 / NBRC 100440) (Methanococcus jannaschii).